The following is a 305-amino-acid chain: GTPase Era (305 aa).

An Era-type G domain is found at Arg11 to Glu181. The tract at residues Gly19–Ser26 is G1. Gly19 to Ser26 is a GTP binding site. Residues Glu45–His49 are G2. Positions Asp66 to Gly69 are G3. GTP is bound by residues Asp66–Leu70 and Thr130–Asp133. Residues Thr130–Asp133 form a G4 region. The tract at residues Val160–Ser162 is G5. A KH type-2 domain is found at Leu212–Lys291.

This sequence belongs to the TRAFAC class TrmE-Era-EngA-EngB-Septin-like GTPase superfamily. Era GTPase family. Monomer.

It localises to the cytoplasm. The protein localises to the cell membrane. An essential GTPase that binds both GDP and GTP, with rapid nucleotide exchange. Plays a role in 16S rRNA processing and 30S ribosomal subunit biogenesis and possibly also in cell cycle regulation and energy metabolism. This is GTPase Era from Corynebacterium glutamicum (strain ATCC 13032 / DSM 20300 / JCM 1318 / BCRC 11384 / CCUG 27702 / LMG 3730 / NBRC 12168 / NCIMB 10025 / NRRL B-2784 / 534).